The sequence spans 119 residues: Large ribosomal subunit protein bL20 (119 aa).

This sequence belongs to the bacterial ribosomal protein bL20 family.

Binds directly to 23S ribosomal RNA and is necessary for the in vitro assembly process of the 50S ribosomal subunit. It is not involved in the protein synthesizing functions of that subunit. The sequence is that of Large ribosomal subunit protein bL20 from Bordetella petrii (strain ATCC BAA-461 / DSM 12804 / CCUG 43448).